The chain runs to 104 residues: Large ribosomal subunit protein bL21 (104 aa).

The protein belongs to the bacterial ribosomal protein bL21 family. Part of the 50S ribosomal subunit. Contacts protein L20.

This protein binds to 23S rRNA in the presence of protein L20. The sequence is that of Large ribosomal subunit protein bL21 from Elusimicrobium minutum (strain Pei191).